Consider the following 715-residue polypeptide: Polyribonucleotide nucleotidyltransferase (715 aa).

Mg(2+) contacts are provided by aspartate 485 and aspartate 491. The region spanning 552 to 611 (PRIHTMKIDPKKIKDVIGKGGAVIRALTEETGTSIDIDDDGTVKIAATDNNAAKAVMARI) is the KH domain. The S1 motif domain occupies 621 to 689 (NAIYKGKVTR…RQNRIRLTMK (69 aa)). A disordered region spans residues 695 to 715 (TPVAENVTEEAEVSSEQQAEI).

Belongs to the polyribonucleotide nucleotidyltransferase family. In terms of assembly, component of the RNA degradosome, which is a multiprotein complex involved in RNA processing and mRNA degradation. It depends on Mg(2+) as a cofactor.

The protein localises to the cytoplasm. The enzyme catalyses RNA(n+1) + phosphate = RNA(n) + a ribonucleoside 5'-diphosphate. Its function is as follows. Involved in mRNA degradation. Catalyzes the phosphorolysis of single-stranded polyribonucleotides processively in the 3'- to 5'-direction. This is Polyribonucleotide nucleotidyltransferase from Actinobacillus pleuropneumoniae serotype 3 (strain JL03).